The primary structure comprises 166 residues: Regulatory protein RecX (166 aa).

This sequence belongs to the RecX family.

It localises to the cytoplasm. Its function is as follows. Modulates RecA activity. The chain is Regulatory protein RecX from Escherichia fergusonii (strain ATCC 35469 / DSM 13698 / CCUG 18766 / IAM 14443 / JCM 21226 / LMG 7866 / NBRC 102419 / NCTC 12128 / CDC 0568-73).